The primary structure comprises 954 residues: Endoplasmic reticulum aminopeptidase 2 (954 aa).

Over 1 to 7 (MANSCRK) the chain is Cytoplasmic. The helical; Signal-anchor for type II membrane protein transmembrane segment at 8 to 28 (LIFNIYVVFYCSAVIMPQICI) threads the bilayer. Residues 29–954 (CSQFTSSPID…TLRKWLLTSI (926 aa)) lie on the Lumenal side of the membrane. N-linked (GlcNAc...) asparagine glycans are attached at residues N79 and N113. Substrate is bound by residues E194 and 328 to 332 (GAMEN). Residue H364 participates in Zn(2+) binding. The active-site Proton acceptor is the E365. Residues H368 and E387 each coordinate Zn(2+). N-linked (GlcNAc...) asparagine glycosylation occurs at N399. Cysteines 415 and 454 form a disulfide. Residue N644 is glycosylated (N-linked (GlcNAc...) asparagine). C753 and C760 form a disulfide bridge.

Belongs to the peptidase M1 family. In terms of assembly, heterodimer with ERAP1. Zn(2+) is required as a cofactor. Post-translationally, N-glycosylated.

The protein resides in the endoplasmic reticulum membrane. Its function is as follows. Aminopeptidase that plays a central role in peptide trimming, a step required for the generation of most HLA class I-binding peptides. Peptide trimming is essential to customize longer precursor peptides to fit them to the correct length required for presentation on MHC class I molecules. Preferentially hydrolyzes the basic residues Arg and Lys. This Bos taurus (Bovine) protein is Endoplasmic reticulum aminopeptidase 2 (ERAP2).